Here is a 150-residue protein sequence, read N- to C-terminus: uncharacterized protein (150 aa).

One can recognise an N-acetyltransferase domain in the interval 4-149 (IQIRNYQPGD…TNFYMRYKPQ (146 aa)).

It belongs to the acetyltransferase family.

This is an uncharacterized protein from Escherichia coli (strain K12).